We begin with the raw amino-acid sequence, 154 residues long: Low molecular weight protein-tyrosine-phosphatase PtpA (154 aa).

Cys-8 (nucleophile) is an active-site residue. The active site involves Arg-14. The active-site Proton donor is Asp-120.

It belongs to the low molecular weight phosphotyrosine protein phosphatase family. Interacts with host CORO1A. Phosphorylations at Tyr-122 and Tyr-123 are essential for phosphatase activity.

The protein resides in the secreted. The enzyme catalyses O-phospho-L-tyrosyl-[protein] + H2O = L-tyrosyl-[protein] + phosphate. In terms of biological role, secreted tyrosine phosphatase that plays a critical role during infection as a bacterial effector protein that counteracts host defenses. Required for intramacrophage survival. The protein is Low molecular weight protein-tyrosine-phosphatase PtpA (ptpA) of Staphylococcus aureus (strain MRSA252).